Here is a 274-residue protein sequence, read N- to C-terminus: 2,3,4,5-tetrahydropyridine-2,6-dicarboxylate N-succinyltransferase (274 aa).

Substrate contacts are provided by arginine 106 and aspartate 143.

The protein belongs to the transferase hexapeptide repeat family. As to quaternary structure, homotrimer.

It localises to the cytoplasm. The catalysed reaction is (S)-2,3,4,5-tetrahydrodipicolinate + succinyl-CoA + H2O = (S)-2-succinylamino-6-oxoheptanedioate + CoA. The protein operates within amino-acid biosynthesis; L-lysine biosynthesis via DAP pathway; LL-2,6-diaminopimelate from (S)-tetrahydrodipicolinate (succinylase route): step 1/3. The polypeptide is 2,3,4,5-tetrahydropyridine-2,6-dicarboxylate N-succinyltransferase (Acidovorax sp. (strain JS42)).